We begin with the raw amino-acid sequence, 206 residues long: Orotate phosphoribosyltransferase (206 aa).

5-phospho-alpha-D-ribose 1-diphosphate is bound by residues K26, 72 to 73, R99, K100, K103, H105, and 124 to 132; these read YK and DDVMTSGFS. Orotate is bound by residues T128 and R157.

It belongs to the purine/pyrimidine phosphoribosyltransferase family. PyrE subfamily. In terms of assembly, homodimer. Requires Mg(2+) as cofactor.

It carries out the reaction orotidine 5'-phosphate + diphosphate = orotate + 5-phospho-alpha-D-ribose 1-diphosphate. It functions in the pathway pyrimidine metabolism; UMP biosynthesis via de novo pathway; UMP from orotate: step 1/2. Functionally, catalyzes the transfer of a ribosyl phosphate group from 5-phosphoribose 1-diphosphate to orotate, leading to the formation of orotidine monophosphate (OMP). In Buchnera aphidicola subsp. Baizongia pistaciae (strain Bp), this protein is Orotate phosphoribosyltransferase.